The sequence spans 2603 residues: Protein SABRE (2603 aa).

A signal peptide spans Met1–Gly35. N-linked (GlcNAc...) asparagine glycosylation is present at Asn196. Positions Phe259–Pro287 are disordered. N-linked (GlcNAc...) asparagine glycans are attached at residues Asn331, Asn486, Asn597, Asn807, Asn867, Asn887, Asn1154, Asn1249, Asn1280, and Asn1408. Positions Pro786–Lys814 are disordered. The disordered stretch occupies residues Phe1416–Gln1436. Residues Asn1492 and Asn1659 are each glycosylated (N-linked (GlcNAc...) asparagine). Disordered stretches follow at residues Glu1656–Gly1676 and Glu1717–Gly1777. Positions Lys1731–Glu1748 are enriched in basic and acidic residues. Residues Met1749 to His1766 are compositionally biased toward polar residues. Residues Val1995 to Ser2023 adopt a coiled-coil conformation. An N-linked (GlcNAc...) asparagine glycan is attached at Asn2333. Disordered stretches follow at residues Glu2339–Lys2380, Gly2448–Gln2479, and Ile2554–Glu2603. Over residues Asp2343 to Lys2380 the composition is skewed to basic and acidic residues. N-linked (GlcNAc...) asparagine glycosylation occurs at Asn2467. Residues Ile2554–Ser2565 are compositionally biased toward basic residues. The segment covering Gln2566–Glu2583 has biased composition (polar residues). A compositionally biased stretch (low complexity) spans Pro2586–Glu2603.

This sequence belongs to the SABRE family. In terms of tissue distribution, highest levels in leaves, also expressed in leaves, flowers, and siliques, and, to a lower extent, in roots and stems.

It localises to the secreted. It is found in the golgi apparatus. May be involved in membrane trafficking. Required for cell expansion, especially in root cortex, probably by counteracting the action of ethylene in promoting cells radial expansion. Involved in female organ development. Antagonistically interacts with ethylene signaling to regulate plant responses to Pi starvation. This Arabidopsis thaliana (Mouse-ear cress) protein is Protein SABRE.